We begin with the raw amino-acid sequence, 319 residues long: Very-long-chain 3-oxoacyl-CoA reductase-A (319 aa).

The helical transmembrane segment at 17–37 (LFWVGALITASLALYVVYKTI) threads the bilayer. 56–85 (GKWAVVTGATDGIGKSYAEELARRGFSMML) is a binding site for NADP(+). A run of 2 helical transmembrane segments spans residues 188–208 (GVILNISSASGMFPVPLLTIY) and 282–302 (AVMGWVTTILAPIDLVLNLGL). S195 serves as a coordination point for substrate. The active-site Proton acceptor is Y208.

This sequence belongs to the short-chain dehydrogenases/reductases (SDR) family. 17-beta-HSD 3 subfamily.

The protein resides in the endoplasmic reticulum membrane. The enzyme catalyses a very-long-chain (3R)-3-hydroxyacyl-CoA + NADP(+) = a very-long-chain 3-oxoacyl-CoA + NADPH + H(+). The catalysed reaction is 17beta-estradiol + NAD(+) = estrone + NADH + H(+). It carries out the reaction 17beta-estradiol + NADP(+) = estrone + NADPH + H(+). Its pathway is lipid metabolism; fatty acid biosynthesis. It participates in steroid biosynthesis; estrogen biosynthesis. Functionally, catalyzes the second of the four reactions of the long-chain fatty acids elongation cycle. This endoplasmic reticulum-bound enzymatic process, allows the addition of two carbons to the chain of long- and very long-chain fatty acids/VLCFAs per cycle. This enzyme has a 3-ketoacyl-CoA reductase activity, reducing 3-ketoacyl-CoA to 3-hydroxyacyl-CoA, within each cycle of fatty acid elongation. Thereby, it may participate in the production of VLCFAs of different chain lengths that are involved in multiple biological processes as precursors of membrane lipids and lipid mediators. May also catalyze the transformation of estrone (E1) into estradiol (E2) and play a role in estrogen formation. The chain is Very-long-chain 3-oxoacyl-CoA reductase-A (hsd17b12a) from Danio rerio (Zebrafish).